The chain runs to 101 residues: Urease subunit beta (101 aa).

It belongs to the urease beta subunit family. As to quaternary structure, heterotrimer of UreA (gamma), UreB (beta) and UreC (alpha) subunits. Three heterotrimers associate to form the active enzyme.

Its subcellular location is the cytoplasm. It catalyses the reaction urea + 2 H2O + H(+) = hydrogencarbonate + 2 NH4(+). The protein operates within nitrogen metabolism; urea degradation; CO(2) and NH(3) from urea (urease route): step 1/1. This Chelativorans sp. (strain BNC1) protein is Urease subunit beta.